Here is a 490-residue protein sequence, read N- to C-terminus: 3-octaprenyl-4-hydroxybenzoate carboxy-lyase (490 aa).

Residue Asn172 coordinates Mn(2+). Prenylated FMN contacts are provided by residues 175-177, 189-191, and 194-195; these read IYR, RWL, and RG. Residue Glu238 coordinates Mn(2+). Asp287 (proton donor) is an active-site residue.

The protein belongs to the UbiD family. As to quaternary structure, homohexamer. It depends on prenylated FMN as a cofactor. Requires Mn(2+) as cofactor.

The protein localises to the cell membrane. It carries out the reaction a 4-hydroxy-3-(all-trans-polyprenyl)benzoate + H(+) = a 2-(all-trans-polyprenyl)phenol + CO2. Its pathway is cofactor biosynthesis; ubiquinone biosynthesis. Its function is as follows. Catalyzes the decarboxylation of 3-octaprenyl-4-hydroxy benzoate to 2-octaprenylphenol, an intermediate step in ubiquinone biosynthesis. In Idiomarina loihiensis (strain ATCC BAA-735 / DSM 15497 / L2-TR), this protein is 3-octaprenyl-4-hydroxybenzoate carboxy-lyase.